The chain runs to 274 residues: Cytochrome b-c1 complex subunit Rieske, mitochondrial (274 aa).

Residues 79 to 110 lie on the Mitochondrial matrix side of the membrane; it reads SHTDVKVPDFSDYRRAEVLDSTKSSKESSEAR. The helical transmembrane segment at 111–137 threads the bilayer; it reads KGFSYLVTATTTVGVAYAAKNVVSQFV. At 138-274 the chain is on the mitochondrial intermembrane side; sequence SSMSASADVL…FTSDDVVVVG (137 aa). Residues 187–272 enclose the Rieske domain; it reads EAAVEVSQLR…YEFTSDDVVV (86 aa). Residues C217, H219, C236, H239, and S241 each contribute to the [2Fe-2S] cluster site. C222 and C238 form a disulfide bridge.

It belongs to the Rieske iron-sulfur protein family. In terms of assembly, component of the ubiquinol-cytochrome c oxidoreductase (cytochrome b-c1 complex, complex III, CIII), a multisubunit enzyme composed of 11 subunits. The complex is composed of 3 respiratory subunits cytochrome b, cytochrome c1 and Rieske protein UQCRFS1, 2 core protein subunits UQCRC1/QCR1 and UQCRC2/QCR2, and 6 low-molecular weight protein subunits UQCRH/QCR6, UQCRB/QCR7, UQCRQ/QCR8, UQCR10/QCR9, UQCR11/QCR10 and subunit 9, the cleavage product of Rieske protein UQCRFS1. The complex exists as an obligatory dimer and forms supercomplexes (SCs) in the inner mitochondrial membrane with NADH-ubiquinone oxidoreductase (complex I, CI) and cytochrome c oxidase (complex IV, CIV), resulting in different assemblies (supercomplex SCI(1)III(2)IV(1) and megacomplex MCI(2)III(2)IV(2)). Incorporation of the Rieske protein UQCRFS1 is the penultimate step in complex III assembly. Interacts with TTC19, which is involved in the clearance of UQCRFS1 fragments. As to quaternary structure, component of the ubiquinol-cytochrome c oxidoreductase (cytochrome b-c1 complex, complex III, CIII). Subunit 9 corresponds to the mitochondrial targeting sequence (MTS) of Rieske protein UQCRFS1. It is retained after processing and incorporated inside complex III, where it remains bound to the complex and localizes between the 2 core subunits UQCRC1/QCR1 and UQCRC2/QCR2. Requires [2Fe-2S] cluster as cofactor. In terms of processing, proteolytic processing is necessary for the correct insertion of UQCRFS1 in the complex III dimer. Several fragments are generated during UQCRFS1 insertion, most probably due to the endogenous matrix-processing peptidase (MPP) activity of the 2 core protein subunits UQCRC1/QCR1 and UQCRC2/QCR2, which are homologous to the 2 mitochondrial-processing peptidase (MPP) subunits beta-MPP and alpha-MPP respectively. The action of the protease is also necessary for the clearance of the UQCRFS1 fragments.

It is found in the mitochondrion inner membrane. The enzyme catalyses a quinol + 2 Fe(III)-[cytochrome c](out) = a quinone + 2 Fe(II)-[cytochrome c](out) + 2 H(+)(out). Functionally, component of the ubiquinol-cytochrome c oxidoreductase, a multisubunit transmembrane complex that is part of the mitochondrial electron transport chain which drives oxidative phosphorylation. The respiratory chain contains 3 multisubunit complexes succinate dehydrogenase (complex II, CII), ubiquinol-cytochrome c oxidoreductase (cytochrome b-c1 complex, complex III, CIII) and cytochrome c oxidase (complex IV, CIV), that cooperate to transfer electrons derived from NADH and succinate to molecular oxygen, creating an electrochemical gradient over the inner membrane that drives transmembrane transport and the ATP synthase. The cytochrome b-c1 complex catalyzes electron transfer from ubiquinol to cytochrome c, linking this redox reaction to translocation of protons across the mitochondrial inner membrane, with protons being carried across the membrane as hydrogens on the quinol. In the process called Q cycle, 2 protons are consumed from the matrix, 4 protons are released into the intermembrane space and 2 electrons are passed to cytochrome c. The Rieske protein is a catalytic core subunit containing a [2Fe-2S] iron-sulfur cluster. It cycles between 2 conformational states during catalysis to transfer electrons from the quinol bound in the Q(0) site in cytochrome b to cytochrome c1. Incorporation of UQCRFS1 is the penultimate step in complex III assembly. Component of the ubiquinol-cytochrome c oxidoreductase (cytochrome b-c1 complex, complex III, CIII). UQCRFS1 undergoes proteolytic processing once it is incorporated in the complex III dimer. One of the fragments, called subunit 9, corresponds to its mitochondrial targeting sequence (MTS). The proteolytic processing is necessary for the correct insertion of UQCRFS1 in the complex III dimer, but the persistence of UQCRFS1-derived fragments may prevent newly imported UQCRFS1 to be processed and assembled into complex III and is detrimental for the complex III structure and function. In Mus musculus (Mouse), this protein is Cytochrome b-c1 complex subunit Rieske, mitochondrial.